A 573-amino-acid chain; its full sequence is NADP-dependent malic enzyme, chloroplastic (573 aa).

Catalysis depends on tyrosine 123, which acts as the Proton donor. Arginine 176 contributes to the NAD(+) binding site. Lysine 194 serves as the catalytic Proton acceptor. The a divalent metal cation site is built by glutamate 265, aspartate 266, and aspartate 289. An NAD(+)-binding site is contributed by aspartate 289. 318–334 (LFLGAGEAGTGIAELIA) serves as a coordination point for NADP(+). Residue asparagine 430 coordinates NAD(+).

The protein belongs to the malic enzymes family. Homotetramer. The cofactor is Mg(2+). It depends on Mn(2+) as a cofactor.

The protein localises to the plastid. It localises to the chloroplast. It carries out the reaction (S)-malate + NADP(+) = pyruvate + CO2 + NADPH. The catalysed reaction is oxaloacetate + H(+) = pyruvate + CO2. It participates in photosynthesis; C4 acid pathway. In terms of biological role, the chloroplastic ME isoform decarboxylates malate shuttled from neighboring mesophyll cells. The CO(2) released is then refixed by ribulose-bisphosphate carboxylase. This pathway eliminates the photorespiratory loss of CO(2) that occurs in most plants. The protein is NADP-dependent malic enzyme, chloroplastic of Solanum lycopersicum (Tomato).